A 177-amino-acid polypeptide reads, in one-letter code: Dihydrofolate reductase type 9 (177 aa).

One can recognise a DHFR domain in the interval 3–167 (SLNMIVAVNK…TKLIFQIWIN (165 aa)).

It belongs to the dihydrofolate reductase family. Homodimer.

The catalysed reaction is (6S)-5,6,7,8-tetrahydrofolate + NADP(+) = 7,8-dihydrofolate + NADPH + H(+). It participates in cofactor biosynthesis; tetrahydrofolate biosynthesis; 5,6,7,8-tetrahydrofolate from 7,8-dihydrofolate: step 1/1. Its function is as follows. Key enzyme in folate metabolism. Catalyzes an essential reaction for de novo glycine and purine synthesis, and for DNA precursor synthesis. In Escherichia coli, this protein is Dihydrofolate reductase type 9 (dhfrIX).